Consider the following 877-residue polypeptide: Leucine--tRNA ligase (877 aa).

Positions 43-53 match the 'HIGH' region motif; that stretch reads PYPSGRIHMGH. Positions 628–632 match the 'KMSKS' region motif; it reads KMSKS. Residue lysine 631 coordinates ATP.

It belongs to the class-I aminoacyl-tRNA synthetase family.

The protein localises to the cytoplasm. The enzyme catalyses tRNA(Leu) + L-leucine + ATP = L-leucyl-tRNA(Leu) + AMP + diphosphate. The chain is Leucine--tRNA ligase from Brucella canis (strain ATCC 23365 / NCTC 10854 / RM-666).